The sequence spans 357 residues: 3-isopropylmalate dehydrogenase (357 aa).

Residues arginine 97, arginine 107, arginine 135, and aspartate 224 each coordinate substrate. Mg(2+) is bound by residues aspartate 224, aspartate 248, and aspartate 252. An NAD(+)-binding site is contributed by 282 to 294; that stretch reads GSAPDIAGQDKAN.

It belongs to the isocitrate and isopropylmalate dehydrogenases family. LeuB type 1 subfamily. In terms of assembly, homodimer. It depends on Mg(2+) as a cofactor. Mn(2+) serves as cofactor.

The protein localises to the cytoplasm. The catalysed reaction is (2R,3S)-3-isopropylmalate + NAD(+) = 4-methyl-2-oxopentanoate + CO2 + NADH. The protein operates within amino-acid biosynthesis; L-leucine biosynthesis; L-leucine from 3-methyl-2-oxobutanoate: step 3/4. Catalyzes the oxidation of 3-carboxy-2-hydroxy-4-methylpentanoate (3-isopropylmalate) to 3-carboxy-4-methyl-2-oxopentanoate. The product decarboxylates to 4-methyl-2 oxopentanoate. This chain is 3-isopropylmalate dehydrogenase, found in Parasynechococcus marenigrum (strain WH8102).